A 272-amino-acid polypeptide reads, in one-letter code: Acyl-[acyl-carrier-protein]--UDP-N-acetylglucosamine O-acyltransferase (272 aa).

Belongs to the transferase hexapeptide repeat family. LpxA subfamily. In terms of assembly, homotrimer.

It localises to the cytoplasm. The catalysed reaction is a (3R)-hydroxyacyl-[ACP] + UDP-N-acetyl-alpha-D-glucosamine = a UDP-3-O-[(3R)-3-hydroxyacyl]-N-acetyl-alpha-D-glucosamine + holo-[ACP]. It functions in the pathway glycolipid biosynthesis; lipid IV(A) biosynthesis; lipid IV(A) from (3R)-3-hydroxytetradecanoyl-[acyl-carrier-protein] and UDP-N-acetyl-alpha-D-glucosamine: step 1/6. In terms of biological role, involved in the biosynthesis of lipid A, a phosphorylated glycolipid that anchors the lipopolysaccharide to the outer membrane of the cell. This is Acyl-[acyl-carrier-protein]--UDP-N-acetylglucosamine O-acyltransferase from Methylobacterium radiotolerans (strain ATCC 27329 / DSM 1819 / JCM 2831 / NBRC 15690 / NCIMB 10815 / 0-1).